Reading from the N-terminus, the 209-residue chain is Proteasome subunit beta (209 aa).

The propeptide at 1-10 is removed in mature form; by autocatalysis; the sequence is MVEQSDTMKG. Thr-11 acts as the Nucleophile in catalysis.

This sequence belongs to the peptidase T1B family. In terms of assembly, the 20S proteasome core is composed of 14 alpha and 14 beta subunits that assemble into four stacked heptameric rings, resulting in a barrel-shaped structure. The two inner rings, each composed of seven catalytic beta subunits, are sandwiched by two outer rings, each composed of seven alpha subunits. The catalytic chamber with the active sites is on the inside of the barrel. Has a gated structure, the ends of the cylinder being occluded by the N-termini of the alpha-subunits. Is capped at one or both ends by the proteasome regulatory ATPase, PAN.

The protein resides in the cytoplasm. It carries out the reaction Cleavage of peptide bonds with very broad specificity.. The formation of the proteasomal ATPase PAN-20S proteasome complex, via the docking of the C-termini of PAN into the intersubunit pockets in the alpha-rings, triggers opening of the gate for substrate entry. Interconversion between the open-gate and close-gate conformations leads to a dynamic regulation of the 20S proteasome proteolysis activity. Its function is as follows. Component of the proteasome core, a large protease complex with broad specificity involved in protein degradation. This is Proteasome subunit beta from Methanospirillum hungatei JF-1 (strain ATCC 27890 / DSM 864 / NBRC 100397 / JF-1).